The sequence spans 285 residues: Stress response regulator protein 1 (285 aa).

2 stretches are compositionally biased toward low complexity: residues 43–58 (DTSS…SSNN) and 128–138 (SIISSKSSNKS). Disordered stretches follow at residues 43–66 (DTSS…SDQQ) and 114–142 (PLTP…TTVV). A Response regulatory domain is found at 158-276 (SFLIVDDNII…LDFMANSIDD (119 aa)). Residue D209 is modified to 4-aspartylphosphate.

Required for stress adaptation, morphogenesis and virulence. This chain is Stress response regulator protein 1 (SRR1), found in Candida dubliniensis (strain CD36 / ATCC MYA-646 / CBS 7987 / NCPF 3949 / NRRL Y-17841) (Yeast).